The primary structure comprises 337 residues: Ketol-acid reductoisomerase (NADP(+)) (337 aa).

One can recognise a KARI N-terminal Rossmann domain in the interval 1–181 (MKIYYEHDAD…GAARAGVIAT (181 aa)). Residues 24 to 27 (FGSQ), Arg-47, Ser-50, Ser-52, and 82 to 85 (DEKQ) contribute to the NADP(+) site. The active site involves His-107. Residue Gly-133 coordinates NADP(+). Residues 182–328 (TFKDETETDL…SRLRAMMPFL (147 aa)) form the KARI C-terminal knotted domain. Asp-190, Glu-194, Glu-226, and Glu-230 together coordinate Mg(2+). Position 251 (Ser-251) interacts with substrate.

Belongs to the ketol-acid reductoisomerase family. Mg(2+) is required as a cofactor.

The catalysed reaction is (2R)-2,3-dihydroxy-3-methylbutanoate + NADP(+) = (2S)-2-acetolactate + NADPH + H(+). It carries out the reaction (2R,3R)-2,3-dihydroxy-3-methylpentanoate + NADP(+) = (S)-2-ethyl-2-hydroxy-3-oxobutanoate + NADPH + H(+). The protein operates within amino-acid biosynthesis; L-isoleucine biosynthesis; L-isoleucine from 2-oxobutanoate: step 2/4. It participates in amino-acid biosynthesis; L-valine biosynthesis; L-valine from pyruvate: step 2/4. In terms of biological role, involved in the biosynthesis of branched-chain amino acids (BCAA). Catalyzes an alkyl-migration followed by a ketol-acid reduction of (S)-2-acetolactate (S2AL) to yield (R)-2,3-dihydroxy-isovalerate. In the isomerase reaction, S2AL is rearranged via a Mg-dependent methyl migration to produce 3-hydroxy-3-methyl-2-ketobutyrate (HMKB). In the reductase reaction, this 2-ketoacid undergoes a metal-dependent reduction by NADPH to yield (R)-2,3-dihydroxy-isovalerate. This chain is Ketol-acid reductoisomerase (NADP(+)), found in Thermus thermophilus (strain ATCC BAA-163 / DSM 7039 / HB27).